A 1098-amino-acid polypeptide reads, in one-letter code: Unconventional myosin-If (1098 aa).

The 674-residue stretch at 17–690 (SGVDDMVLLP…SLFLLEEVRE (674 aa)) folds into the Myosin motor domain. 110–117 (GESGAGKT) is a binding site for ATP. Positions 579-589 (PHYIRCIKPNE) are actin-binding. Positions 693–722 (FDGFARTIQKAWRRHVAVRKYEEMREEASN) constitute an IQ domain. Positions 728–917 (KERRRNSINR…GRTLTVSVGD (190 aa)) constitute a TH1 domain. Disordered stretches follow at residues 913-1009 (VSVG…EFLN) and 1021-1044 (KRSV…THGP). The span at 924–937 (KPTRKGMAKGKPRR) shows a compositional bias: basic residues. Residue S1023 is modified to Phosphoserine. The SH3 domain maps to 1041–1098 (THGPRCRALYQYVGQDVDELSFNVNEVIEILMEDPSGWWKGRLHGQEGLFPGNYVEKI).

It belongs to the TRAFAC class myosin-kinesin ATPase superfamily. Myosin family.

Myosins are actin-based motor molecules with ATPase activity. Unconventional myosins serve in intracellular movements. Their highly divergent tails are presumed to bind to membranous compartments, which would be moved relative to actin filaments. The protein is Unconventional myosin-If (MYO1F) of Homo sapiens (Human).